A 355-amino-acid polypeptide reads, in one-letter code: UPF0421 protein BCE33L2478 (355 aa).

4 helical membrane passes run 19–39, 74–94, 109–129, and 131–151; these read IAVFLTVLVCEFFNIPTIFAV, FTFFLGHQALSYALAAMFTIV, TLTAVAMIPITADHYFTAFLI, and LATTSTGIIVSTVVNFFILPP.

Belongs to the UPF0421 family.

It localises to the cell membrane. In Bacillus cereus (strain ZK / E33L), this protein is UPF0421 protein BCE33L2478.